Reading from the N-terminus, the 258-residue chain is Acetylglutamate kinase (258 aa).

Substrate is bound by residues 44–45 (GG), arginine 66, and asparagine 158. Residues 181 to 186 (DVSGIL) and 209 to 211 (IIT) each bind ATP.

Belongs to the acetylglutamate kinase family. ArgB subfamily. In terms of assembly, homodimer.

The protein resides in the cytoplasm. It carries out the reaction N-acetyl-L-glutamate + ATP = N-acetyl-L-glutamyl 5-phosphate + ADP. Its pathway is amino-acid biosynthesis; L-arginine biosynthesis; N(2)-acetyl-L-ornithine from L-glutamate: step 2/4. Its function is as follows. Catalyzes the ATP-dependent phosphorylation of N-acetyl-L-glutamate. This Shigella sonnei (strain Ss046) protein is Acetylglutamate kinase.